The chain runs to 72 residues: Large ribosomal subunit protein uL29 (72 aa).

Belongs to the universal ribosomal protein uL29 family.

This chain is Large ribosomal subunit protein uL29, found in Prochlorococcus marinus subsp. pastoris (strain CCMP1986 / NIES-2087 / MED4).